Reading from the N-terminus, the 116-residue chain is Phage-like element PBSX protein XkdD (116 aa).

The chain is Phage-like element PBSX protein XkdD (xkdD) from Bacillus subtilis (strain 168).